Reading from the N-terminus, the 273-residue chain is Thiazole synthase (273 aa).

Lys-111 (schiff-base intermediate with DXP) is an active-site residue. 1-deoxy-D-xylulose 5-phosphate contacts are provided by residues Gly-172, Ala-198–Gly-199, and Asn-220–Ser-221. Residues Arg-251–Lys-273 are disordered. Polar residues predominate over residues Ala-258 to Leu-267.

The protein belongs to the ThiG family. As to quaternary structure, homotetramer. Forms heterodimers with either ThiH or ThiS.

It is found in the cytoplasm. It catalyses the reaction [ThiS sulfur-carrier protein]-C-terminal-Gly-aminoethanethioate + 2-iminoacetate + 1-deoxy-D-xylulose 5-phosphate = [ThiS sulfur-carrier protein]-C-terminal Gly-Gly + 2-[(2R,5Z)-2-carboxy-4-methylthiazol-5(2H)-ylidene]ethyl phosphate + 2 H2O + H(+). It functions in the pathway cofactor biosynthesis; thiamine diphosphate biosynthesis. Functionally, catalyzes the rearrangement of 1-deoxy-D-xylulose 5-phosphate (DXP) to produce the thiazole phosphate moiety of thiamine. Sulfur is provided by the thiocarboxylate moiety of the carrier protein ThiS. In vitro, sulfur can be provided by H(2)S. This chain is Thiazole synthase, found in Synechococcus sp. (strain CC9902).